A 78-amino-acid polypeptide reads, in one-letter code: Large ribosomal subunit protein bL28 (78 aa).

Positions 1 to 28 (MSAYCQVTGRKPGFGKQVSHSHRHTSRR) are disordered.

Belongs to the bacterial ribosomal protein bL28 family.

This Corynebacterium urealyticum (strain ATCC 43042 / DSM 7109) protein is Large ribosomal subunit protein bL28.